The sequence spans 188 residues: Phosphatidylinositol N-acetylglucosaminyltransferase subunit H (188 aa).

This sequence belongs to the PIGH family. In terms of assembly, component of the glycosylphosphatidylinositol-N-acetylglucosaminyltransferase (GPI-GnT) complex composed at least by PIGA, PIGC, PIGH, PIGP, PIGQ, PIGY and DPM2. Interacts with PIGQ.

It localises to the cytoplasm. The protein operates within glycolipid biosynthesis; glycosylphosphatidylinositol-anchor biosynthesis. In terms of biological role, part of the glycosylphosphatidylinositol-N-acetylglucosaminyltransferase (GPI-GnT) complex that catalyzes the transfer of N-acetylglucosamine from UDP-N-acetylglucosamine to phosphatidylinositol and participates in the first step of GPI biosynthesis. The protein is Phosphatidylinositol N-acetylglucosaminyltransferase subunit H of Bos taurus (Bovine).